The chain runs to 252 residues: 3-deoxy-manno-octulosonate cytidylyltransferase (252 aa).

This sequence belongs to the KdsB family.

Its subcellular location is the cytoplasm. It catalyses the reaction 3-deoxy-alpha-D-manno-oct-2-ulosonate + CTP = CMP-3-deoxy-beta-D-manno-octulosonate + diphosphate. It functions in the pathway nucleotide-sugar biosynthesis; CMP-3-deoxy-D-manno-octulosonate biosynthesis; CMP-3-deoxy-D-manno-octulosonate from 3-deoxy-D-manno-octulosonate and CTP: step 1/1. The protein operates within bacterial outer membrane biogenesis; lipopolysaccharide biosynthesis. Activates KDO (a required 8-carbon sugar) for incorporation into bacterial lipopolysaccharide in Gram-negative bacteria. This is 3-deoxy-manno-octulosonate cytidylyltransferase from Vibrio cholerae serotype O1 (strain ATCC 39315 / El Tor Inaba N16961).